Here is a 548-residue protein sequence, read N- to C-terminus: MAKQLVFDESARRSLERGVNAVANAVKVTLGPRGRNVVIEKKFGSPTITKDGVTVAKEVELEDKLENIGAQLLKEVASKTNDITGDGTTTATVLGQAIVKEGLRNVAAGANPLALKRGIDKAVAVAIEEIKKLAVSVEDSEAIKKVAGISANDETVGQEIASAMDKVGKEGVITIEESKGFDTEVDVVEGMQFDKGFINPYFITNPEKMEAVLEDAYILINEKKISNLKDMLPVLEKVAQTGRPLLIIAEDVEGEALATLVVNKLRGTLNIAAVKAPGFGDRRKEMLRDIAAVTGGEVVSEDLGHKLENVGMEMLGRAARIRITKDETTIVDGKGEQAQIDARVNAIKGELDSTDSDYAREKLQERLAKLSGGVAVIRVGAATETELKEKKHRYEDALSTARSAVEEGIVAGGGTTLLRVIPAVRKAAESLTGDEATGARILIRALEEPARQIAANAGEEGSVIVNAVVGSDKARYGFNAATGEYVEDMVAAGIVDPAKVTRTALQNAASIGALILTTEAIVSDKPEKAAPAMPQGGGDMGGMGGMDF.

Residues 29–32 (TLGP), K50, 86–90 (DGTTT), G413, 479–481 (NAA), and D496 each bind ATP.

It belongs to the chaperonin (HSP60) family. Forms a cylinder of 14 subunits composed of two heptameric rings stacked back-to-back. Interacts with the co-chaperonin GroES.

The protein localises to the cytoplasm. The catalysed reaction is ATP + H2O + a folded polypeptide = ADP + phosphate + an unfolded polypeptide.. In terms of biological role, together with its co-chaperonin GroES, plays an essential role in assisting protein folding. The GroEL-GroES system forms a nano-cage that allows encapsulation of the non-native substrate proteins and provides a physical environment optimized to promote and accelerate protein folding. The sequence is that of Chaperonin GroEL from Deinococcus radiodurans (strain ATCC 13939 / DSM 20539 / JCM 16871 / CCUG 27074 / LMG 4051 / NBRC 15346 / NCIMB 9279 / VKM B-1422 / R1).